Reading from the N-terminus, the 55-residue chain is uncharacterized protein (55 aa).

A helical membrane pass occupies residues 7-24 (VALVGAVLATLTACTGHI).

It localises to the membrane. This is an uncharacterized protein from Escherichia coli O157:H7.